A 116-amino-acid chain; its full sequence is G antigen 2B/2C (116 aa).

The disordered stretch occupies residues 1–116 (MSWRGRSTYR…PEEGEKQSQC (116 aa)). Acidic residues-rich tracts occupy residues 31–44 (FSDE…EEGE) and 86–95 (ECEDGPDGQE). A compositionally biased stretch (basic and acidic residues) spans 102–116 (EEVKTPEEGEKQSQC).

The protein belongs to the GAGE family. Expressed in a variety of tumor tissues but not in normal tissues, except testis.

Functionally, antigen, recognized on melanoma by autologous cytolytic T-lymphocytes. The polypeptide is G antigen 2B/2C (GAGE2B) (Homo sapiens (Human)).